The chain runs to 180 residues: Small ribosomal subunit protein uS5 (180 aa).

The disordered stretch occupies residues Met1 to Asp20. Residues Leu22–Val85 enclose the S5 DRBM domain.

The protein belongs to the universal ribosomal protein uS5 family. As to quaternary structure, part of the 30S ribosomal subunit. Contacts proteins S4 and S8.

In terms of biological role, with S4 and S12 plays an important role in translational accuracy. Functionally, located at the back of the 30S subunit body where it stabilizes the conformation of the head with respect to the body. The polypeptide is Small ribosomal subunit protein uS5 (Nitrosospira multiformis (strain ATCC 25196 / NCIMB 11849 / C 71)).